The sequence spans 469 residues: MTVADIWIIMPLAILAGASLLILLLGAVVPGRYGTAVGVAACVGAALWALQLQPAALSQTLGVAFTPFARFFTVLFSLTAAATLLLSHDHNVRRDISGEEYPATVIFAAFGMAVVSASANLLILFLGLEALTFAFYILVAIDLNRAESAEAGLKYLLLGAISAACIAFGIALLYAAAGTLAIPEVVRLTLSAGAQDPIALAGWGLLLIGIAFKISLVPAHHWTPDVYQGAPTPVVAFLSTASKGAAIAFLLLLLPSGSGFKTLHTPLWWLSLLSMLVGNLAALLQTNLKRMLAYSSIAQMGYLVLALLTGSSEGFAAVILYVVVYTAMNLAAFGAVASLTESVGMENVEDYRGVGYSRPFQAGILALALFALAGIPPTAGFIGKFFIFYAAFRGGEIPLAIVGILAAAVSAYYYLRVVVNLYMHAGDAPESRKSASMTESIALSAAALVILAVGIYPSPLLRLIDSILR.

Transmembrane regions (helical) follow at residues 6–26, 37–57, 61–81, 96–116, 121–141, 156–176, 197–217, 234–254, 263–283, 291–311, 315–335, 362–382, 397–419, and 441–461; these read IWIIMPLAILAGASLLILLLG, VGVAACVGAALWALQLQPAAL, LGVAFTPFARFFTVLFSLTAA, ISGEEYPATVIFAAFGMAVVS, LLILFLGLEALTFAFYILVAI, LLLGAISAACIAFGIALLYAA, PIALAGWGLLLIGIAFKISLV, VVAFLSTASKGAAIAFLLLLL, LHTPLWWLSLLSMLVGNLAAL, MLAYSSIAQMGYLVLALLTGS, FAAVILYVVVYTAMNLAAFGA, AGILALALFALAGIPPTAGFI, IPLAIVGILAAAVSAYYYLRVVV, and IALSAAALVILAVGIYPSPLL.

The protein belongs to the complex I subunit 2 family. In terms of assembly, NDH-1 is composed of 14 different subunits. Subunits NuoA, H, J, K, L, M, N constitute the membrane sector of the complex.

The protein resides in the cell inner membrane. The catalysed reaction is a quinone + NADH + 5 H(+)(in) = a quinol + NAD(+) + 4 H(+)(out). Its function is as follows. NDH-1 shuttles electrons from NADH, via FMN and iron-sulfur (Fe-S) centers, to quinones in the respiratory chain. The immediate electron acceptor for the enzyme in this species is believed to be ubiquinone. Couples the redox reaction to proton translocation (for every two electrons transferred, four hydrogen ions are translocated across the cytoplasmic membrane), and thus conserves the redox energy in a proton gradient. This chain is NADH-quinone oxidoreductase subunit N, found in Geotalea uraniireducens (strain Rf4) (Geobacter uraniireducens).